Reading from the N-terminus, the 454-residue chain is Mitochondrial dynamics protein MID49 (454 aa).

Residues 1 to 22 (MAEFSQKQRKQSGSEGLGSVVD) are Mitochondrial intermembrane-facing. The chain crosses the membrane as a helical span at residues 23–43 (FLLANARLVLGVGGAAVLGIA). The Cytoplasmic segment spans residues 44-454 (TLAVKRLIDR…SGLQVPESLF (411 aa)). A disordered region spans residues 76–113 (ATSPQKPQPPPAAFSQPLATGSPSPSVPVEPTPIHSPT).

Belongs to the MID49/MID51 family. In terms of assembly, interacts with DNM1L.

Its subcellular location is the mitochondrion outer membrane. Its function is as follows. Mitochondrial outer membrane protein which regulates mitochondrial organization. It is required for mitochondrial fission and promotes the recruitment and association of the fission mediator dynamin-related protein 1 (DNM1L) to the mitochondrial surface independently of the mitochondrial fission FIS1 and MFF proteins. Regulates DNM1L GTPase activity. In Mus musculus (Mouse), this protein is Mitochondrial dynamics protein MID49 (Mief2).